The sequence spans 211 residues: Phosphoserine phosphatase (211 aa).

Catalysis depends on D11, which acts as the Nucleophile. Mg(2+) is bound by residues D11 and D13. The Proton donor role is filled by D13. Substrate is bound by residues E20, R56, S99–G100, and K144. D167 lines the Mg(2+) pocket. Residue N170 coordinates substrate.

The protein belongs to the HAD-like hydrolase superfamily. SerB family. It depends on Mg(2+) as a cofactor.

The catalysed reaction is O-phospho-L-serine + H2O = L-serine + phosphate. It carries out the reaction O-phospho-D-serine + H2O = D-serine + phosphate. It participates in amino-acid biosynthesis; L-serine biosynthesis; L-serine from 3-phospho-D-glycerate: step 3/3. The chain is Phosphoserine phosphatase from Methanocaldococcus jannaschii (strain ATCC 43067 / DSM 2661 / JAL-1 / JCM 10045 / NBRC 100440) (Methanococcus jannaschii).